A 164-amino-acid polypeptide reads, in one-letter code: Transcriptional regulator MraZ (164 aa).

SpoVT-AbrB domains follow at residues 7–60 (HFTN…EIDE) and 83–126 (SEIL…EPGR). The tract at residues 141–164 (LRKQLSSRPVAPDAQPPRPHGARE) is disordered. Pro residues predominate over residues 154–164 (AQPPRPHGARE).

The protein belongs to the MraZ family. As to quaternary structure, forms oligomers.

Its subcellular location is the cytoplasm. It localises to the nucleoid. This chain is Transcriptional regulator MraZ, found in Beijerinckia indica subsp. indica (strain ATCC 9039 / DSM 1715 / NCIMB 8712).